A 294-amino-acid chain; its full sequence is Non-selective voltage-gated ion channel VDAC2 (294 aa).

An N-acetylalanine modification is found at Ala-2. ATP-binding residues include Lys-23 and Lys-31. Lys-31 is subject to N6-acetyllysine; alternate. N6-succinyllysine; alternate is present on Lys-31. Residue Lys-31 forms a Glycyl lysine isopeptide (Lys-Gly) (interchain with G-Cter in ubiquitin); alternate linkage. A run of 2 beta stranded transmembrane segments spans residues 37–46 and 50–58; these read LVKLDVKTKS and VEFSTSGSS. Residues Lys-64 and Lys-72 each participate in a glycyl lysine isopeptide (Lys-Gly) (interchain with G-Cter in ubiquitin) cross-link. The chain crosses the membrane as a beta stranded span at residues 65 to 75; sequence VTGTLETKYKW. A Phosphotyrosine modification is found at Tyr-78. Beta stranded transmembrane passes span 80–87, 91–100, and 106–115; these read LTFTEKWN, TLGTEIAIED, and LKLTFDTTFS. Thr-118 carries the post-translational modification Phosphothreonine. Lys-120 is subject to N6-acetyllysine; alternate. A Glycyl lysine isopeptide (Lys-Gly) (interchain with G-Cter in ubiquitin); alternate cross-link involves residue Lys-120. Glycyl lysine isopeptide (Lys-Gly) (interchain with G-Cter in ubiquitin) cross-links involve residues Lys-121 and Lys-124. The next 4 beta stranded transmembrane spans lie at 122–131, 134–141, 148–156, and 161–169; these read SGKIKSSYKR, INLGCDVD, AIHGSAVFG, and LAGYQMTFD. Lys-172 participates in a covalent cross-link: Glycyl lysine isopeptide (Lys-Gly) (interchain with G-Cter in ubiquitin). Transmembrane regions (beta stranded) follow at residues 174 to 186, 189 to 196, 200 to 209, 213 to 222, 229 to 238, and 242 to 249; these read KLTR…GYRT, FQLHTNVN, EFGGSIYQKV, LDTSVNLAWT, RFGIAAKYQL, and ASISAKVN. Phosphoserine is present on Ser-251. NAD(+)-binding positions include 253–255 and 271–275; these read LIG and SALVD. The next 2 membrane-spanning stretches (beta stranded) occupy residues 253–262 and 265–274; these read LIGVGYTQTL and GVKLTLSALV. The residue at position 277 (Lys-277) is an N6-acetyllysine; alternate. Residue Lys-277 forms a Glycyl lysine isopeptide (Lys-Gly) (interchain with G-Cter in ubiquitin); alternate linkage. Residues 284–293 form a beta stranded membrane-spanning segment; that stretch reads HKVGLALELE. Lys-285 is covalently cross-linked (Glycyl lysine isopeptide (Lys-Gly) (interchain with G-Cter in ubiquitin)).

It belongs to the eukaryotic mitochondrial porin family. Monomer, homodimer and higher order oligomers; formation of higher order structures is necessary for scramblase activity. Interacts with ARMC12 in a TBC1D21-dependent manner. Interacts with KLC3. Interacts with SPATA33. Interacts with PPP3CC in a SPATA33-dependent manner. Ubiquitinated by PRKN during mitophagy, leading to its degradation and enhancement of mitophagy. Deubiquitinated by USP30. In terms of tissue distribution, expressed in erythrocytes (at protein level). Expressed in all tissues examined.

Its subcellular location is the mitochondrion outer membrane. It localises to the membrane. The catalysed reaction is chloride(in) = chloride(out). It catalyses the reaction K(+)(in) = K(+)(out). It carries out the reaction a 1,2-diacyl-sn-glycero-3-phospho-L-serine(in) = a 1,2-diacyl-sn-glycero-3-phospho-L-serine(out). The enzyme catalyses a 1,2-diacyl-sn-glycero-3-phosphocholine(in) = a 1,2-diacyl-sn-glycero-3-phosphocholine(out). The catalysed reaction is a 1,2-diacyl-sn-glycero-3-phospho-(1D-myo-inositol)(in) = a 1,2-diacyl-sn-glycero-3-phospho-(1D-myo-inositol)(out). Functionally, non-selective voltage-gated ion channel that mediates the transport of anions and cations through the mitochondrion outer membrane and plasma membrane. The channel adopts an open conformation at zero mV and a closed conformation at both positive and negative potentials. There are two populations of channels; the main that functions in a lower open-state conductance with lower ion selectivity, that switch, in a voltage-dependent manner, from the open to a low-conducting 'closed' state and the other that has a normal ion selectivity in the typical high conductance, 'open' state. Binds various lipids, including the sphingolipid ceramide, the phospholipid phosphatidylcholine, and the sterols cholesterol and oxysterol. Binding of ceramide promotes the mitochondrial outer membrane permeabilization (MOMP) apoptotic pathway. Catalyzes the scrambling of phospholipids across the outer mitochondrial membrane; the mechanism is unrelated to channel activity and is capable of translocating both anionic and zwitterionic phospholipids. The protein is Non-selective voltage-gated ion channel VDAC2 of Homo sapiens (Human).